Reading from the N-terminus, the 195-residue chain is Ureidoglycolate lyase (195 aa).

The protein belongs to the ureidoglycolate lyase family. Homodimer.

The catalysed reaction is (S)-ureidoglycolate = urea + glyoxylate. Its pathway is nitrogen metabolism; (S)-allantoin degradation. Functionally, catalyzes the catabolism of the allantoin degradation intermediate (S)-ureidoglycolate, generating urea and glyoxylate. Involved in the utilization of allantoin as secondary nitrogen source when primary sources are limiting. The protein is Ureidoglycolate lyase (DAL3) of Saccharomyces cerevisiae (strain ATCC 204508 / S288c) (Baker's yeast).